A 454-amino-acid chain; its full sequence is Chromosomal replication initiator protein DnaA (454 aa).

Residues methionine 1–alanine 83 are domain I, interacts with DnaA modulators. Positions alanine 83 to serine 113 are domain II. Positions aspartate 114–alanine 332 are domain III, AAA+ region. ATP is bound by residues glycine 158, glycine 160, lysine 161, and threonine 162. The domain IV, binds dsDNA stretch occupies residues asparagine 333 to lysine 454.

It belongs to the DnaA family. Oligomerizes as a right-handed, spiral filament on DNA at oriC.

The protein localises to the cytoplasm. Functionally, plays an essential role in the initiation and regulation of chromosomal replication. ATP-DnaA binds to the origin of replication (oriC) to initiate formation of the DNA replication initiation complex once per cell cycle. Binds the DnaA box (a 9 base pair repeat at the origin) and separates the double-stranded (ds)DNA. Forms a right-handed helical filament on oriC DNA; dsDNA binds to the exterior of the filament while single-stranded (ss)DNA is stabiized in the filament's interior. The ATP-DnaA-oriC complex binds and stabilizes one strand of the AT-rich DNA unwinding element (DUE), permitting loading of DNA polymerase. After initiation quickly degrades to an ADP-DnaA complex that is not apt for DNA replication. Binds acidic phospholipids. This Streptococcus thermophilus (strain ATCC BAA-250 / LMG 18311) protein is Chromosomal replication initiator protein DnaA.